The primary structure comprises 727 residues: 1,4-alpha-glucan branching enzyme GlgB (727 aa).

The active-site Nucleophile is the Asp-405. Glu-458 functions as the Proton donor in the catalytic mechanism.

Belongs to the glycosyl hydrolase 13 family. GlgB subfamily. As to quaternary structure, monomer.

The enzyme catalyses Transfers a segment of a (1-&gt;4)-alpha-D-glucan chain to a primary hydroxy group in a similar glucan chain.. It functions in the pathway glycan biosynthesis; glycogen biosynthesis. Functionally, catalyzes the formation of the alpha-1,6-glucosidic linkages in glycogen by scission of a 1,4-alpha-linked oligosaccharide from growing alpha-1,4-glucan chains and the subsequent attachment of the oligosaccharide to the alpha-1,6 position. This is 1,4-alpha-glucan branching enzyme GlgB from Yersinia pseudotuberculosis serotype O:1b (strain IP 31758).